A 190-amino-acid polypeptide reads, in one-letter code: Ribose 1,5-bisphosphate phosphokinase PhnN (190 aa).

A disordered region spans residues 135–159 (RGREPEPGIGQRLARPDPAPGHQAD).

This sequence belongs to the ribose 1,5-bisphosphokinase family.

It carries out the reaction alpha-D-ribose 1,5-bisphosphate + ATP = 5-phospho-alpha-D-ribose 1-diphosphate + ADP. The protein operates within metabolic intermediate biosynthesis; 5-phospho-alpha-D-ribose 1-diphosphate biosynthesis; 5-phospho-alpha-D-ribose 1-diphosphate from D-ribose 5-phosphate (route II): step 3/3. Catalyzes the phosphorylation of ribose 1,5-bisphosphate to 5-phospho-D-ribosyl alpha-1-diphosphate (PRPP). The polypeptide is Ribose 1,5-bisphosphate phosphokinase PhnN (Pseudofrankia inefficax (strain DSM 45817 / CECT 9037 / DDB 130130 / EuI1c) (Frankia inefficax)).